The following is a 499-amino-acid chain: Thioredoxin reductase 1, cytoplasmic (499 aa).

FAD contacts are provided by residues 18–23 (IGGGSG), 42–43 (DF), 58–59 (TC), and 63–67 (GCIPK). The cysteines at positions 59 and 64 are disulfide-linked. K68 is modified (N6-succinyllysine). At Y131 the chain carries Phosphotyrosine. Residues 131–132 (YG) and T161 each bind FAD. NADP(+) is bound by residues R166, 198 to 204 (ASYVALE), 221 to 222 (RS), R226, 226 to 228 (RGF), 291 to 293 (VGR), and K315. Y200 contributes to the FAD binding site. Residues D334, 341-343 (ELT), and H472 each bind FAD. E341 is a binding site for NADP(+). The Proton acceptor role is filled by H472. The cysteinyl-selenocysteine (Cys-Sec) cross-link spans 497-498 (CU). U498 is a non-standard amino acid (selenocysteine).

It belongs to the class-I pyridine nucleotide-disulfide oxidoreductase family. As to quaternary structure, homodimer. FAD serves as cofactor. ISGylated.

It localises to the cytoplasm. The enzyme catalyses [thioredoxin]-dithiol + NADP(+) = [thioredoxin]-disulfide + NADPH + H(+). The catalysed reaction is H2O2 + NADPH + H(+) = NADP(+) + 2 H2O. Its function is as follows. Reduces disulfideprotein thioredoxin (Trx) to its dithiol-containing form. Homodimeric flavoprotein involved in the regulation of cellular redox reactions, growth and differentiation. Contains a selenocysteine residue at the C-terminal active site that is essential for catalysis. Also has reductase activity on hydrogen peroxide (H2O2). In Rattus norvegicus (Rat), this protein is Thioredoxin reductase 1, cytoplasmic.